A 495-amino-acid chain; its full sequence is Phage-like element PBSX protein XkdE (495 aa).

Belongs to the phage portal family. PBSX subfamily.

The polypeptide is Phage-like element PBSX protein XkdE (xkdE) (Bacillus subtilis (strain 168)).